We begin with the raw amino-acid sequence, 115 residues long: UPF0102 protein NMA0341 (115 aa).

The protein belongs to the UPF0102 family.

In Neisseria meningitidis serogroup A / serotype 4A (strain DSM 15465 / Z2491), this protein is UPF0102 protein NMA0341.